We begin with the raw amino-acid sequence, 359 residues long: Mitochondrial glutathione transporter SLC25A39 (359 aa).

Residues 1–18 (MGDRPAVRISAAITPVQQ) are Mitochondrial intermembrane-facing. Solcar repeat units lie at residues 13-149 (ITPV…LRDF), 157-241 (HGDH…VKAQ), and 251-346 (ASFT…GKTF). The helical transmembrane segment at 19–39 (MLASGTGAVLTSLFVTPLDVV) threads the bilayer. The Mitochondrial matrix portion of the chain corresponds to 40 to 119 (KIRLQAQQTP…VKITHNEGLR (80 aa)). [2Fe-2S] cluster contacts are provided by C72, C76, C86, and C92. A helical transmembrane segment spans residues 120-140 (SLWSGLPPTLVMAVPATVIYF). Topologically, residues 141–162 (TCYDQLRDFLCYSMGYHGDHIP) are mitochondrial intermembrane. Residues 163-183 (LIAGGLARLGAVSVISPLELV) form a helical membrane-spanning segment. Topologically, residues 184 to 212 (RTKMQSRRLQYSELMVCIRSSVAQDGWLS) are mitochondrial matrix. A helical transmembrane segment spans residues 213-233 (LWRGWGPTVLRDVPFSALYWF). Residues 234–253 (NYELVKAQLCEHYRTPQASF) lie on the Mitochondrial intermembrane side of the membrane. The helical transmembrane segment at 254-274 (TISFTAGAVSGAIAAVLTLPF) threads the bilayer. Over 275 to 316 (DVVKTRRQIQLGEMEALGAVSMKKPSSTWNMMRNIWIDMGYK) the chain is Mitochondrial matrix. A helical membrane pass occupies residues 317-337 (GLFAGFLPRVIKVAPACAVMI). Topologically, residues 338–359 (STYEFGKTFFQERNLHQARCGL) are mitochondrial intermembrane.

The protein belongs to the mitochondrial carrier (TC 2.A.29) family. Cleaved and degraded by AFG3L2; degradation by AFG3L2 is regulated by the ability of SLC25A39 to bind iron-sulfur. In absence of mitochondrial glutathione, SLC25A39 binds iron-sulfur, preventing cleavage and degradation by AFG3L2. The presence of mitochondrial glutathione prevents iron-sulfur-binding to SLC25A39, promoting cleavage and degradation by AFG3L2.

It localises to the mitochondrion inner membrane. It carries out the reaction glutathione(in) = glutathione(out). With respect to regulation, the activity of SLC25A39 is regulated by levels of mitochondrial glutathione via its ability to bind [2Fe-2S] iron-sulfur cluster. Upon physiological levels of mitochondrial glutathione, glutathione prevents iron-sulfur-binding to SLC25A39 promoting cleavage and degradation by AFG3L2. Upon depletion of mitochondrial glutathione, SLC25A39 binds iron-sulfur, preventing cleavage and degradation by AFG3L2. In terms of biological role, mitochondrial transporter required for glutathione import into mitochondria. Glutathione, which plays key roles in oxidative metabolism, is produced exclusively in the cytosol and is imported in many organelles. Mitochondrial glutathione is required for the activity and stability of proteins containing iron-sulfur clusters, as well as erythropoiesis. Involved in the early steps of heme biosynthesis. This Danio rerio (Zebrafish) protein is Mitochondrial glutathione transporter SLC25A39 (slc25a39).